The primary structure comprises 551 residues: Scaffold protein OPG125 (551 aa).

It belongs to the orthopoxvirus protein OPG125 family. Homotrimer. Self-assembles to form a layer. Interacts with OPG158 (via N-terminus); this interaction is necessary for OPG125 association with membranes.

It localises to the membrane. Scaffold protein which forms a transitory spherical honeycomb lattice providing curvature and rigidity to the convex membrane of crescent and immature virions (IV). This association occurs concomitantly with viral membrane formation. Targeted by the drug rifampicin, which prevents the formation of this lattice, and hence virus morphogenesis. In the presence of rifampicin, irregularly shaped membranes that lack the honeycomb layer accumulate around areas of electron-dense viroplasm. This layer is lost from virions during maturation from IV to mature virion (MV), through the proteolysis of OPG158 N-terminus. The chain is Scaffold protein OPG125 (OPG125) from Vaccinia virus (strain Ankara) (VACV).